The primary structure comprises 47 residues: MADSALQQQLDEVRALLTRARELFGPNPIEPPTDIAPDPDSTKTWLI.

The tract at residues 24–47 is disordered; the sequence is FGPNPIEPPTDIAPDPDSTKTWLI.

This is an uncharacterized protein from Mycobacterium tuberculosis (strain ATCC 25618 / H37Rv).